We begin with the raw amino-acid sequence, 586 residues long: Germ cell nuclear acidic protein (586 aa).

Disordered stretches follow at residues 17-119 (GWDR…LSSE), 176-202 (KAKT…SPVF), 217-266 (TWRT…SSEE), and 279-318 (LGGR…PVKD). The segment covering 65–76 (SGKENRSQEEHI) has biased composition (basic and acidic residues). The segment covering 94 to 107 (TPKSTFKQSASSAQ) has biased composition (polar residues). Over residues 176 to 191 (KAKTVKTPKSVQKTKK) the composition is skewed to basic residues. Over residues 225-244 (PPSDEHQATSKDREETEKPR) the composition is skewed to basic and acidic residues. A compositionally biased stretch (polar residues) spans 299–313 (CLSTPSATGRKTGSQ). Residues 383 to 482 (KLYQLYNTSV…LYARKAMLAH (100 aa)) enclose the SprT-like domain.

This sequence belongs to the serine-aspartate repeat-containing protein (SDr) family.

Its subcellular location is the nucleus. It is found in the PML body. The protein localises to the chromosome. May play a role in DNA-protein cross-links (DPCs) clearance, ensuring the genomic stability by protecting germ cells and early embryos from various sources of damage. The chain is Germ cell nuclear acidic protein (gcna) from Danio rerio (Zebrafish).